The sequence spans 427 residues: Dihydroorotase (427 aa).

Residues His60 and His62 each coordinate Zn(2+). Substrate is bound by residues His62 to Arg64 and Asn94. Zn(2+) contacts are provided by Asp152, His179, and His232. Asn278 is a substrate binding site. Asp305 contacts Zn(2+). Asp305 is an active-site residue. Residues His309 and Phe323–Gly324 each bind substrate.

The protein belongs to the metallo-dependent hydrolases superfamily. DHOase family. Class I DHOase subfamily. The cofactor is Zn(2+).

It catalyses the reaction (S)-dihydroorotate + H2O = N-carbamoyl-L-aspartate + H(+). It functions in the pathway pyrimidine metabolism; UMP biosynthesis via de novo pathway; (S)-dihydroorotate from bicarbonate: step 3/3. Its function is as follows. Catalyzes the reversible cyclization of carbamoyl aspartate to dihydroorotate. This is Dihydroorotase from Bacillus caldolyticus.